Reading from the N-terminus, the 1024-residue chain is RNA cytidine acetyltransferase (1024 aa).

287–296 (GRGKSAALGL) serves as a coordination point for ATP. Residue K426 is modified to N6-acetyllysine. ATP is bound at residue R470. Positions 558–753 (CLLPPVPPTQ…HSCIMLKTLA (196 aa)) constitute an N-acetyltransferase domain. Residues 629–631 (IAV) and 636–642 (QGMGYGS) contribute to the acetyl-CoA site. The tract at residues 702–1024 (PAERLDYLGV…RKDMKLKRKK (323 aa)) is required for localization to the nucleolus and midbody. T716 carries the phosphothreonine modification. R725 contributes to the acetyl-CoA binding site. S934, S984, and S987 each carry phosphoserine. The interval 990–1024 (SDKKRKLETKQEPKQSKKLKKRDNNRKDMKLKRKK) is disordered. Positions 1005–1024 (SKKLKKRDNNRKDMKLKRKK) are enriched in basic residues.

It belongs to the RNA cytidine acetyltransferase family. NAT10 subfamily. Part of the small subunit (SSU) processome, composed of more than 70 proteins and the RNA chaperone small nucleolar RNA (snoRNA) U3. Interacts with THUMPD1. Interacts with SUN1 (via N-terminus). Interacts with TERT.

It localises to the nucleus. The protein resides in the nucleolus. It carries out the reaction a cytidine in 18S rRNA + acetyl-CoA + ATP + H2O = an N(4)-acetylcytidine in 18S rRNA + ADP + phosphate + CoA + H(+). The enzyme catalyses a cytidine in tRNA + acetyl-CoA + ATP + H2O = an N(4)-acetylcytidine in tRNA + ADP + phosphate + CoA + H(+). The catalysed reaction is a cytidine in mRNA + acetyl-CoA + ATP + H2O = an N(4)-acetylcytidine in mRNA + ADP + phosphate + CoA + H(+). Functionally, RNA cytidine acetyltransferase that catalyzes the formation of N(4)-acetylcytidine (ac4C) modification on mRNAs, 18S rRNA and tRNAs. Catalyzes ac4C modification of a broad range of mRNAs, enhancing mRNA stability and translation. mRNA ac4C modification is frequently present within wobble cytidine sites and promotes translation efficiency. Mediates the formation of ac4C at position 1842 in 18S rRNA. May also catalyze the formation of ac4C at position 1337 in 18S rRNA. Required for early nucleolar cleavages of precursor rRNA at sites A0, A1 and A2 during 18S rRNA synthesis. Catalyzes the formation of ac4C in serine and leucine tRNAs. Requires the tRNA-binding adapter protein THUMPD1 for full tRNA acetyltransferase activity but not for 18S rRNA acetylation. In addition to RNA acetyltransferase activity, also able to acetylate lysine residues of proteins, such as histones, microtubules, p53/TP53 and MDM2, in vitro. The relevance of the protein lysine acetyltransferase activity is however unsure in vivo. Activates telomerase activity by stimulating the transcription of TERT, and may also regulate telomerase function by affecting the balance of telomerase subunit assembly, disassembly, and localization. Involved in the regulation of centrosome duplication by acetylating CENATAC during mitosis, promoting SASS6 proteasome degradation. Part of the small subunit (SSU) processome, first precursor of the small eukaryotic ribosomal subunit. During the assembly of the SSU processome in the nucleolus, many ribosome biogenesis factors, an RNA chaperone and ribosomal proteins associate with the nascent pre-rRNA and work in concert to generate RNA folding, modifications, rearrangements and cleavage as well as targeted degradation of pre-ribosomal RNA by the RNA exosome. This is RNA cytidine acetyltransferase from Mus musculus (Mouse).